Consider the following 417-residue polypeptide: Serine hydroxymethyltransferase (417 aa).

Residues Leu-121 and 125–127 contribute to the (6S)-5,6,7,8-tetrahydrofolate site; that span reads GHL. Lys-229 bears the N6-(pyridoxal phosphate)lysine mark. Residue 355 to 357 participates in (6S)-5,6,7,8-tetrahydrofolate binding; sequence SPF.

It belongs to the SHMT family. As to quaternary structure, homodimer. Pyridoxal 5'-phosphate is required as a cofactor.

Its subcellular location is the cytoplasm. It catalyses the reaction (6R)-5,10-methylene-5,6,7,8-tetrahydrofolate + glycine + H2O = (6S)-5,6,7,8-tetrahydrofolate + L-serine. It functions in the pathway one-carbon metabolism; tetrahydrofolate interconversion. It participates in amino-acid biosynthesis; glycine biosynthesis; glycine from L-serine: step 1/1. Its function is as follows. Catalyzes the reversible interconversion of serine and glycine with tetrahydrofolate (THF) serving as the one-carbon carrier. This reaction serves as the major source of one-carbon groups required for the biosynthesis of purines, thymidylate, methionine, and other important biomolecules. Also exhibits THF-independent aldolase activity toward beta-hydroxyamino acids, producing glycine and aldehydes, via a retro-aldol mechanism. The sequence is that of Serine hydroxymethyltransferase from Klebsiella pneumoniae subsp. pneumoniae (strain ATCC 700721 / MGH 78578).